The chain runs to 257 residues: UPF0259 membrane protein WIGBR3650 (257 aa).

6 helical membrane passes run 23–43 (IIFF…IFLP), 89–109 (LSSL…INTI), 122–142 (IILS…ISFL), 148–168 (ALML…PILI), 190–210 (IKTV…ILVI), and 223–243 (VKIF…IYMY).

It belongs to the UPF0259 family.

It localises to the cell membrane. In Wigglesworthia glossinidia brevipalpis, this protein is UPF0259 membrane protein WIGBR3650.